We begin with the raw amino-acid sequence, 428 residues long: Elongation factor 1-alpha (428 aa).

The tr-type G domain occupies Lys-5–Lys-215. Positions Gly-14–Ser-21 are G1. Position 14-21 (Gly-14–Ser-21) interacts with GTP. Residue Ser-21 coordinates Mg(2+). Positions Gly-68–Asp-72 are G2. Positions Asp-89 to Gly-92 are G3. Residues Asp-89–His-93 and Asn-144–Asp-147 each bind GTP. Positions Asn-144–Asp-147 are G4. The segment at Ser-181–Trp-183 is G5.

Belongs to the TRAFAC class translation factor GTPase superfamily. Classic translation factor GTPase family. EF-Tu/EF-1A subfamily.

It is found in the cytoplasm. It catalyses the reaction GTP + H2O = GDP + phosphate + H(+). Functionally, GTP hydrolase that promotes the GTP-dependent binding of aminoacyl-tRNA to the A-site of ribosomes during protein biosynthesis. This Thermococcus kodakarensis (strain ATCC BAA-918 / JCM 12380 / KOD1) (Pyrococcus kodakaraensis (strain KOD1)) protein is Elongation factor 1-alpha.